The sequence spans 177 residues: Putative adenylate kinase (177 aa).

ATP is bound by residues glycine 10, glycine 12, lysine 13, threonine 14, and threonine 15. The interval 30-50 (NLRDYALEKGIGEMKENELEI) is NMP. Residues 99–109 (ERGYGREKLGE) are LID. Residues arginine 100 and lysine 138 each contribute to the ATP site.

This sequence belongs to the adenylate kinase family. AK6 subfamily. Interacts with uS11. Not a structural component of 40S pre-ribosomes, but transiently interacts with them by binding to uS11.

The enzyme catalyses AMP + ATP = 2 ADP. It catalyses the reaction ATP + H2O = ADP + phosphate + H(+). Its function is as follows. Broad-specificity nucleoside monophosphate (NMP) kinase that catalyzes the reversible transfer of the terminal phosphate group between nucleoside triphosphates and monophosphates. Also has ATPase activity. Involved in the late maturation steps of the 30S ribosomal particles, specifically 16S rRNA maturation. While NMP activity is not required for ribosome maturation, ATPase activity is. Associates transiently with small ribosomal subunit protein uS11. ATP hydrolysis breaks the interaction with uS11. May temporarily remove uS11 from the ribosome to enable a conformational change of the ribosomal RNA that is needed for the final maturation step of the small ribosomal subunit. The polypeptide is Putative adenylate kinase (Thermococcus kodakarensis (strain ATCC BAA-918 / JCM 12380 / KOD1) (Pyrococcus kodakaraensis (strain KOD1))).